The primary structure comprises 268 residues: Glucosamine-6-phosphate deaminase (268 aa).

The active-site Proton acceptor; for enolization step is the Asp67. The For ring-opening step role is filled by Asn137. His139 serves as the catalytic Proton acceptor; for ring-opening step. Glu144 functions as the For ring-opening step in the catalytic mechanism.

It belongs to the glucosamine/galactosamine-6-phosphate isomerase family. NagB subfamily. Homohexamer.

It catalyses the reaction alpha-D-glucosamine 6-phosphate + H2O = beta-D-fructose 6-phosphate + NH4(+). The protein operates within amino-sugar metabolism; N-acetylneuraminate degradation; D-fructose 6-phosphate from N-acetylneuraminate: step 5/5. In terms of biological role, catalyzes the reversible isomerization-deamination of glucosamine 6-phosphate (GlcN6P) to form fructose 6-phosphate (Fru6P) and ammonium ion. In Pseudoalteromonas translucida (strain TAC 125), this protein is Glucosamine-6-phosphate deaminase.